Consider the following 673-residue polypeptide: FLYWCH-type zinc finger-containing protein 1 (673 aa).

The segment at 1 to 62 (MPLPEPSEQD…SSTATLPNNT (62 aa)) is disordered. Ser21 is modified (phosphoserine). Residues 47–62 (VASQETSSTATLPNNT) are compositionally biased toward polar residues. FLYWCH-type zinc fingers lie at residues 92–150 (FLKT…DHCH) and 235–293 (FLKT…SHCH). Lys110 participates in a covalent cross-link: Glycyl lysine isopeptide (Lys-Gly) (interchain with G-Cter in SUMO2). The span at 147–158 (DHCHPPEKEGLD) shows a compositional bias: basic and acidic residues. A disordered region spans residues 147 to 178 (DHCHPPEKEGLDRKKRHRGRPPSSALPEGAEV). Phosphoserine is present on residues Ser294 and Ser339. The tract at residues 351–402 (LSRSKSKSKSKSRSKSKSKSRSRSRKRAKKQQESSQEPPEEDQDVDPRGPEF) is disordered. A compositionally biased stretch (basic residues) spans 354-379 (SKSKSKSKSRSKSKSKSRSRSRKRAK). 3 FLYWCH-type zinc fingers span residues 402 to 460 (FLKT…SHCH), 490 to 548 (FLKT…RHCH), and 581 to 639 (FLRT…SHCH). Residues 646 to 673 (LEALRQREKAPSAAKKKKKKKKKKKGIH) form a disordered region. The segment covering 659–673 (AKKKKKKKKKKKGIH) has biased composition (basic residues). Lys666 participates in a covalent cross-link: Glycyl lysine isopeptide (Lys-Gly) (interchain with G-Cter in SUMO2).

Interacts with CTNNB1 (when unphosphorylated), perhaps preventing interaction of CTNNB1 with TCF4, and thereby regulating transcription activation; phosphorylation of CTNNB1 may inhibit the interaction.

Its subcellular location is the nucleus. The protein resides in the chromosome. The protein localises to the centromere. Functionally, transcription cofactor. Negatively regulates transcription activation by catenin beta-1 CTNNB1, perhaps acting by competing with TCF4 for CTNNB1 binding. May play a role in DNA-damage response signaling. Binds specifically to DNA sequences at peri-centromeric chromatin loci. In Mus musculus (Mouse), this protein is FLYWCH-type zinc finger-containing protein 1 (Flywch1).